The following is a 392-amino-acid chain: Lipase (392 aa).

Residues methionine 1–alanine 26 form the signal peptide. Positions valine 27–arginine 95 are excised as a propeptide. Residues proline 50–glutamine 69 form a disordered region. 3 disulfide bridges follow: cysteine 152/cysteine 391, cysteine 163/cysteine 166, and cysteine 358/cysteine 367. The active-site Nucleophile is serine 268. The Charge relay system role is filled by aspartate 327. Aspartate 379 provides a ligand contact to Ca(2+). Histidine 380 functions as the Charge relay system in the catalytic mechanism.

This sequence belongs to the AB hydrolase superfamily. Lipase family.

It is found in the secreted. Its subcellular location is the extracellular space. The catalysed reaction is a triacylglycerol + H2O = a diacylglycerol + a fatty acid + H(+). With respect to regulation, lipase activity is maximal at a lipid-water interface (interfacial activation), probably by an induced conformational change that results in an increased accessibility of the active site to the substrate. Functionally, hydrolyzes ester bonds of triglycerides as well as of their derived partial glycerides with a strong 1,3-positional specificity. In Rhizopus niveus, this protein is Lipase.